A 547-amino-acid polypeptide reads, in one-letter code: Chaperonin GroEL (547 aa).

Residues 30 to 33 (TLGP), K51, 87 to 91 (DGTTT), G415, 479 to 481 (NAA), and D495 each bind ATP.

Belongs to the chaperonin (HSP60) family. As to quaternary structure, forms a cylinder of 14 subunits composed of two heptameric rings stacked back-to-back. Interacts with the co-chaperonin GroES.

It localises to the cytoplasm. The catalysed reaction is ATP + H2O + a folded polypeptide = ADP + phosphate + an unfolded polypeptide.. Its function is as follows. Together with its co-chaperonin GroES, plays an essential role in assisting protein folding. The GroEL-GroES system forms a nano-cage that allows encapsulation of the non-native substrate proteins and provides a physical environment optimized to promote and accelerate protein folding. The polypeptide is Chaperonin GroEL (Enterobacter sp. (strain 638)).